The following is a 208-amino-acid chain: Outer-membrane lipoprotein LolB (208 aa).

Residues 1-21 (MLSSKRRLMRLLPLASLLLTA) form the signal peptide. A lipid anchor (N-palmitoyl cysteine) is attached at C22. The S-diacylglycerol cysteine moiety is linked to residue C22.

This sequence belongs to the LolB family. As to quaternary structure, monomer.

The protein resides in the cell outer membrane. Its function is as follows. Plays a critical role in the incorporation of lipoproteins in the outer membrane after they are released by the LolA protein. This chain is Outer-membrane lipoprotein LolB, found in Erwinia tasmaniensis (strain DSM 17950 / CFBP 7177 / CIP 109463 / NCPPB 4357 / Et1/99).